Reading from the N-terminus, the 246-residue chain is Aliphatic sulfonates import ATP-binding protein SsuB 2 (246 aa).

The ABC transporter domain maps to 4 to 218; it reads VTVRGLRRAF…RRDPRFEQAR (215 aa). Position 36-43 (36-43) interacts with ATP; it reads GRSGGGKT.

Belongs to the ABC transporter superfamily. Aliphatic sulfonates importer (TC 3.A.1.17.2) family. As to quaternary structure, the complex is composed of two ATP-binding proteins (SsuB), two transmembrane proteins (SsuC) and a solute-binding protein (SsuA).

It localises to the cell membrane. The enzyme catalyses ATP + H2O + aliphatic sulfonate-[sulfonate-binding protein]Side 1 = ADP + phosphate + aliphatic sulfonateSide 2 + [sulfonate-binding protein]Side 1.. In terms of biological role, part of the ABC transporter complex SsuABC involved in aliphatic sulfonates import. Responsible for energy coupling to the transport system. In Frankia alni (strain DSM 45986 / CECT 9034 / ACN14a), this protein is Aliphatic sulfonates import ATP-binding protein SsuB 2.